Here is a 244-residue protein sequence, read N- to C-terminus: rRNA adenine N-6-methyltransferase (244 aa).

Positions 11, 13, 38, 59, 84, and 101 each coordinate S-adenosyl-L-methionine.

It belongs to the class I-like SAM-binding methyltransferase superfamily. rRNA adenine N(6)-methyltransferase family.

The catalysed reaction is adenosine(2085) in 23S rRNA + 2 S-adenosyl-L-methionine = N(6)-dimethyladenosine(2085) in 23S rRNA + 2 S-adenosyl-L-homocysteine + 2 H(+). This protein produces a dimethylation of the adenine residue at position 2085 in 23S rRNA, resulting in reduced affinity between ribosomes and macrolide-lincosamide-streptogramin B antibiotics. The protein is rRNA adenine N-6-methyltransferase (ermC) of Staphylococcus aureus.